We begin with the raw amino-acid sequence, 806 residues long: Centrosomal protein of 85 kDa-like (806 aa).

3 disordered regions span residues 1-27 (MWGR…AGSD), 51-89 (NNHL…LSFK), and 101-146 (HVMP…SSLD). A Phosphoserine modification is found at Ser15. A compositionally biased stretch (polar residues) spans 60–74 (TSDSGDTGIGTSCSD). Over residues 135–146 (DHSRGERDSSLD) the composition is skewed to basic and acidic residues. At Ser207 the chain carries Phosphoserine. Residues 308–353 (PLEGRTTDDSYSLAPWQQPQTEEFQQGSETPMQVLTGSSRQSYSPP) are disordered. Polar residues predominate over residues 322-351 (PWQQPQTEEFQQGSETPMQVLTGSSRQSYS). The stretch at 442 to 644 (QEELEQKLAS…ILEIQSMQGK (203 aa)) forms a coiled coil.

Belongs to the CEP85 family.

It is found in the cytoplasm. The protein resides in the cytoskeleton. It localises to the microtubule organizing center. Its subcellular location is the centrosome. Plays an essential role in neuronal cell migration. This Mus musculus (Mouse) protein is Centrosomal protein of 85 kDa-like.